A 264-amino-acid chain; its full sequence is Hemin import ATP-binding protein HmuV (264 aa).

In terms of domain architecture, ABC transporter spans Ile2 to Ala241. Residue Gly34–Thr41 participates in ATP binding.

Belongs to the ABC transporter superfamily. Heme (hemin) importer (TC 3.A.1.14.5) family. As to quaternary structure, the complex is composed of two ATP-binding proteins (HmuV), two transmembrane proteins (HmuU) and a solute-binding protein (HmuT).

The protein resides in the cell inner membrane. Functionally, part of the ABC transporter complex HmuTUV involved in hemin import. Responsible for energy coupling to the transport system. This chain is Hemin import ATP-binding protein HmuV, found in Rhizobium etli (strain ATCC 51251 / DSM 11541 / JCM 21823 / NBRC 15573 / CFN 42).